Reading from the N-terminus, the 457-residue chain is Glutamate--tRNA ligase 1 (457 aa).

Positions 9-19 (PSPTGYIHIGN) match the 'HIGH' region motif. Residues 250–254 (GLSKR) carry the 'KMSKS' region motif. Residue Lys-253 participates in ATP binding.

Belongs to the class-I aminoacyl-tRNA synthetase family. Glutamate--tRNA ligase type 1 subfamily. As to quaternary structure, monomer.

It is found in the cytoplasm. It carries out the reaction tRNA(Glu) + L-glutamate + ATP = L-glutamyl-tRNA(Glu) + AMP + diphosphate. Its function is as follows. Catalyzes the attachment of glutamate to tRNA(Glu) in a two-step reaction: glutamate is first activated by ATP to form Glu-AMP and then transferred to the acceptor end of tRNA(Glu). The sequence is that of Glutamate--tRNA ligase 1 from Brucella canis (strain ATCC 23365 / NCTC 10854 / RM-666).